The sequence spans 190 residues: dCTP deaminase, dUMP-forming (190 aa).

DCTP is bound by residues 101–106, Asp119, 127–129, Gln148, Tyr162, Lys170, and Gln174; these read KSSLGR and TLE. Glu129 (proton donor/acceptor) is an active-site residue. The tract at residues 160-190 is disordered; the sequence is HPYGSSRAGSKYQGQRGPTPSRSCQNFIRST. Residues 171 to 190 show a composition bias toward polar residues; sequence YQGQRGPTPSRSCQNFIRST.

Belongs to the dCTP deaminase family. Homotrimer.

It carries out the reaction dCTP + 2 H2O = dUMP + NH4(+) + diphosphate. It participates in pyrimidine metabolism; dUMP biosynthesis; dUMP from dCTP: step 1/1. In terms of biological role, bifunctional enzyme that catalyzes both the deamination of dCTP to dUTP and the hydrolysis of dUTP to dUMP without releasing the toxic dUTP intermediate. The sequence is that of dCTP deaminase, dUMP-forming from Mycobacterium bovis (strain ATCC BAA-935 / AF2122/97).